The primary structure comprises 407 residues: Argininosuccinate synthase (407 aa).

Residues 11–19 and Ala-39 each bind ATP; that span reads AYSGGLDTS. Positions 90 and 95 each coordinate L-citrulline. Residue Gly-120 participates in ATP binding. L-aspartate contacts are provided by Thr-122, Asn-126, and Asp-127. L-citrulline is bound at residue Asn-126. L-citrulline-binding residues include Arg-130, Ser-179, Ser-188, Glu-264, and Tyr-276.

It belongs to the argininosuccinate synthase family. Type 1 subfamily. In terms of assembly, homotetramer.

It is found in the cytoplasm. The enzyme catalyses L-citrulline + L-aspartate + ATP = 2-(N(omega)-L-arginino)succinate + AMP + diphosphate + H(+). The protein operates within amino-acid biosynthesis; L-arginine biosynthesis; L-arginine from L-ornithine and carbamoyl phosphate: step 2/3. The sequence is that of Argininosuccinate synthase from Roseiflexus sp. (strain RS-1).